The sequence spans 369 residues: Uroporphyrinogen decarboxylase (369 aa).

8 residues coordinate coproporphyrinogen I: Arg-39, Ala-41, Arg-43, Arg-52, Asp-88, Tyr-166, Ser-221, and His-341. Arg-39, Ala-41, and Arg-43 together coordinate coproporphyrinogen III. Coproporphyrinogen III-binding residues include Asp-88, Tyr-166, Ser-221, and His-341.

The protein belongs to the uroporphyrinogen decarboxylase family. As to quaternary structure, homodimer.

Its subcellular location is the cytoplasm. The protein localises to the cytosol. It catalyses the reaction uroporphyrinogen III + 4 H(+) = coproporphyrinogen III + 4 CO2. The enzyme catalyses uroporphyrinogen I + 4 H(+) = coproporphyrinogen I + 4 CO2. The protein operates within porphyrin-containing compound metabolism; protoporphyrin-IX biosynthesis; coproporphyrinogen-III from 5-aminolevulinate: step 4/4. Functionally, catalyzes the sequential decarboxylation of the four acetate side chains of uroporphyrinogen to form coproporphyrinogen and participates in the fifth step in the heme biosynthetic pathway. Isomer I or isomer III of uroporphyrinogen may serve as substrate, but only coproporphyrinogen III can ultimately be converted to heme. In vitro also decarboxylates pentacarboxylate porphyrinogen I. The polypeptide is Uroporphyrinogen decarboxylase (Danio rerio (Zebrafish)).